A 68-amino-acid chain; its full sequence is Lantibiotic mersacidin (68 aa).

The interval 1-28 (MSQEAIIRSWKDPFSRENSTQNPAGNPF) is disordered. Positions 1-48 (MSQEAIIRSWKDPFSRENSTQNPAGNPFSELKEAQMDKLVGAGDMEAA) are excised as a propeptide. A cross-link (beta-methyllanthionine (Cys-Thr)) is located at residues 49–50 (CT). Cross-links (beta-methyllanthionine (Thr-Cys)) lie at residues 52 to 60 (TLPGGGGVC) and 61 to 66 (TLTSEC). The S-(2-aminovinyl)-3-methyl-D-cysteine (Thr-Cys) cross-link spans 63–68 (TSECIC). The residue at position 64 (Ser64) is a 2,3-didehydroalanine (Ser).

This sequence belongs to the type B lantibiotic family. Maturation of lantibiotics involves the enzymatic conversion of Thr, and Ser into dehydrated AA and the formation of thioether bonds with cysteine. The carboxy-terminal beta-methyllanthionine undergoes decarboxylation. This is followed by membrane translocation and cleavage of the modified precursor.

Its function is as follows. Kills a number of Gram-positive bacteria. Acts at the level of cell wall biosynthesis by interfering with bacterial peptidoglycan biosynthesis. Specifically inhibits the conversion of the lipid II intermediate into polymeric nascent glycan strands by transglycosylation. May interact with the peptidoglycan precursor rather than with the enzyme. This is Lantibiotic mersacidin (mrsA) from Bacillus sp. (strain HIL-Y85/54728).